The chain runs to 1265 residues: Kinesin-related protein 13 (1265 aa).

Positions 23-350 (NIQAFVRVRP…LEYALKAKNI (328 aa)) constitute a Kinesin motor domain. 106–113 (GQTGTGKT) is an ATP binding site. Residues 331–459 (LVNLEETINT…KQQQEKQKFI (129 aa)) adopt a coiled-coil conformation. 5 disordered regions span residues 918–1026 (KSGE…QPLI), 1085–1119 (SLVNESPFSSPKLSKQKILQDQIQPPQPPSILSQL), 1127–1146 (LQPQQPQQQPPSFFNNLNGS), 1158–1214 (LLDD…NQSL), and 1245–1265 (FGGGSTISSKLKSLKQQTPLK). Residues 930–951 (IPSPISTSSSSSSSSSISSIHS) show a composition bias toward low complexity. Polar residues-rich tracts occupy residues 960–980 (HQSINNSIKSNNFDGSKSINC), 1003–1026 (LNLNSTPKSVSKNLKSSQQQQPLI), and 1085–1097 (SLVNESPFSSPKL). Composition is skewed to low complexity over residues 1100-1119 (QKILQDQIQPPQPPSILSQL) and 1128-1146 (QPQQPQQQPPSFFNNLNGS). Acidic residues predominate over residues 1158 to 1169 (LLDDDSDSDNSD). Residues 1174–1195 (SLLSSNKKSSRASKNAVVSKKV) are compositionally biased toward low complexity. Polar residues predominate over residues 1250-1265 (TISSKLKSLKQQTPLK).

The protein belongs to the TRAFAC class myosin-kinesin ATPase superfamily. Kinesin family. BimC subfamily.

The protein resides in the cytoplasm. It is found in the cytoskeleton. Its function is as follows. Microtubule-associated force-producing protein that plays a role in organelle transport. Its motor activity is directed toward the microtubule's plus end. Cooperates with dynein to control the spindle elongation rate, but is dispensable for mitosis. This Dictyostelium discoideum (Social amoeba) protein is Kinesin-related protein 13 (kif13).